We begin with the raw amino-acid sequence, 126 residues long: Late histone H2A.3, gonadal (126 aa).

Residues 1 to 18 show a composition bias toward basic residues; it reads MSGRGKGAKAKGKAKSRS. Positions 1 to 21 are disordered; sequence MSGRGKGAKAKGKAKSRSSRA. Serine 2 is subject to N-acetylserine. A Phosphoserine modification is found at serine 2. Glutamine 104 bears the N5-methylglutamine mark. A Glycyl lysine isopeptide (Lys-Gly) (interchain with G-Cter in ubiquitin) cross-link involves residue lysine 119.

Belongs to the histone H2A family. As to quaternary structure, the nucleosome is a histone octamer containing two molecules each of H2A, H2B, H3 and H4 assembled in one H3-H4 heterotetramer and two H2A-H2B heterodimers. The octamer wraps approximately 147 bp of DNA. Monoubiquitination of Lys-119 gives a specific tag for epigenetic transcriptional repression. Post-translationally, phosphorylation of Ser-2 directly represses transcription.

The protein localises to the nucleus. It localises to the chromosome. In terms of biological role, core component of nucleosome. Nucleosomes wrap and compact DNA into chromatin, limiting DNA accessibility to the cellular machineries which require DNA as a template. Histones thereby play a central role in transcription regulation, DNA repair, DNA replication and chromosomal stability. DNA accessibility is regulated via a complex set of post-translational modifications of histones, also called histone code, and nucleosome remodeling. In Psammechinus miliaris (Green sea urchin), this protein is Late histone H2A.3, gonadal.